Consider the following 452-residue polypeptide: Chromosomal replication initiator protein DnaA (452 aa).

Residues 1 to 73 form a domain I, interacts with DnaA modulators region; sequence MSPNSTLWQT…NELATKYSST (73 aa). Positions 73-102 are domain II; it reads TPVRLKFVSQEEVIEEPVADRKLTIDYRQG. Residues 103–323 form a domain III, AAA+ region region; sequence NLNSTYTFDS…GALIRLISYA (221 aa). Positions 147, 149, 150, and 151 each coordinate ATP. The interval 324–452 is domain IV, binds dsDNA; sequence QTFNLEITMN…VKKIDSPLLK (129 aa).

The protein belongs to the DnaA family. As to quaternary structure, oligomerizes as a right-handed, spiral filament on DNA at oriC.

The protein localises to the cytoplasm. In terms of biological role, plays an essential role in the initiation and regulation of chromosomal replication. ATP-DnaA binds to the origin of replication (oriC) to initiate formation of the DNA replication initiation complex once per cell cycle. Binds the DnaA box (a 9 base pair repeat at the origin) and separates the double-stranded (ds)DNA. Forms a right-handed helical filament on oriC DNA; dsDNA binds to the exterior of the filament while single-stranded (ss)DNA is stabiized in the filament's interior. The ATP-DnaA-oriC complex binds and stabilizes one strand of the AT-rich DNA unwinding element (DUE), permitting loading of DNA polymerase. After initiation quickly degrades to an ADP-DnaA complex that is not apt for DNA replication. Binds acidic phospholipids. The sequence is that of Chromosomal replication initiator protein DnaA from Acholeplasma laidlawii (strain PG-8A).